Here is a 123-residue protein sequence, read N- to C-terminus: Holo-[acyl-carrier-protein] synthase (123 aa).

Mg(2+) is bound by residues D8 and E60.

It belongs to the P-Pant transferase superfamily. AcpS family. Requires Mg(2+) as cofactor.

The protein localises to the cytoplasm. It catalyses the reaction apo-[ACP] + CoA = holo-[ACP] + adenosine 3',5'-bisphosphate + H(+). Transfers the 4'-phosphopantetheine moiety from coenzyme A to a Ser of acyl-carrier-protein. This Ehrlichia ruminantium (strain Welgevonden) protein is Holo-[acyl-carrier-protein] synthase.